Consider the following 210-residue polypeptide: MSAAMSEVRIAAEPRTEFGKGGARRTRRAGKVPAVLYGHGKPPRHIALPAHDLLHAFKTDAGTNVLLTLELAEGTELALAKDVQRHPIKGSFEHIDLVLVARGEKVVADIPVQVIGEPHPDTLVDQQVTTIAVKADATRLPGPIEVDITGLEPGTSILARQLVLPAGSELDADPDLVVVQCLAKRTNAQQEASLGETPVAEEAGVASASV.

It belongs to the bacterial ribosomal protein bL25 family. CTC subfamily. As to quaternary structure, part of the 50S ribosomal subunit; part of the 5S rRNA/L5/L18/L25 subcomplex. Contacts the 5S rRNA. Binds to the 5S rRNA independently of L5 and L18.

Its function is as follows. This is one of the proteins that binds to the 5S RNA in the ribosome where it forms part of the central protuberance. The polypeptide is Large ribosomal subunit protein bL25 (Frankia casuarinae (strain DSM 45818 / CECT 9043 / HFP020203 / CcI3)).